Here is a 277-residue protein sequence, read N- to C-terminus: Thiazole synthase (277 aa).

K119 functions as the Schiff-base intermediate with DXP in the catalytic mechanism. 1-deoxy-D-xylulose 5-phosphate contacts are provided by residues G180, 206-207 (AG), and 228-229 (NT).

This sequence belongs to the ThiG family. Homotetramer. Forms heterodimers with either ThiH or ThiS.

It localises to the plastid. The protein resides in the chloroplast. It carries out the reaction [ThiS sulfur-carrier protein]-C-terminal-Gly-aminoethanethioate + 2-iminoacetate + 1-deoxy-D-xylulose 5-phosphate = [ThiS sulfur-carrier protein]-C-terminal Gly-Gly + 2-[(2R,5Z)-2-carboxy-4-methylthiazol-5(2H)-ylidene]ethyl phosphate + 2 H2O + H(+). It functions in the pathway cofactor biosynthesis; thiamine diphosphate biosynthesis. In terms of biological role, catalyzes the rearrangement of 1-deoxy-D-xylulose 5-phosphate (DXP) to produce the thiazole phosphate moiety of thiamine. Sulfur is provided by the thiocarboxylate moiety of the carrier protein ThiS. In vitro, sulfur can be provided by H(2)S. The polypeptide is Thiazole synthase (Porphyra purpurea (Red seaweed)).